We begin with the raw amino-acid sequence, 195 residues long: N-(5'-phosphoribosyl)anthranilate isomerase (195 aa).

The protein belongs to the TrpF family.

The catalysed reaction is N-(5-phospho-beta-D-ribosyl)anthranilate = 1-(2-carboxyphenylamino)-1-deoxy-D-ribulose 5-phosphate. It functions in the pathway amino-acid biosynthesis; L-tryptophan biosynthesis; L-tryptophan from chorismate: step 3/5. The sequence is that of N-(5'-phosphoribosyl)anthranilate isomerase from Methanoregula boonei (strain DSM 21154 / JCM 14090 / 6A8).